The primary structure comprises 360 residues: Phospho-N-acetylmuramoyl-pentapeptide-transferase (360 aa).

Transmembrane regions (helical) follow at residues 25 to 45 (RGIL…PWMI), 73 to 93 (TMGG…WADL), 97 to 117 (YVWV…VDDY), 142 to 162 (VGAA…TLII), 168 to 188 (ASIP…VGSS), 199 to 219 (GLAI…CYLS), 236 to 256 (AGEL…FLWF), 263 to 283 (VFMG…IAVI), 288 to 308 (IVLF…VIQV), and 338 to 358 (VIVR…ATLK).

This sequence belongs to the glycosyltransferase 4 family. MraY subfamily. Requires Mg(2+) as cofactor.

It is found in the cell inner membrane. It catalyses the reaction UDP-N-acetyl-alpha-D-muramoyl-L-alanyl-gamma-D-glutamyl-meso-2,6-diaminopimeloyl-D-alanyl-D-alanine + di-trans,octa-cis-undecaprenyl phosphate = di-trans,octa-cis-undecaprenyl diphospho-N-acetyl-alpha-D-muramoyl-L-alanyl-D-glutamyl-meso-2,6-diaminopimeloyl-D-alanyl-D-alanine + UMP. It participates in cell wall biogenesis; peptidoglycan biosynthesis. In terms of biological role, catalyzes the initial step of the lipid cycle reactions in the biosynthesis of the cell wall peptidoglycan: transfers peptidoglycan precursor phospho-MurNAc-pentapeptide from UDP-MurNAc-pentapeptide onto the lipid carrier undecaprenyl phosphate, yielding undecaprenyl-pyrophosphoryl-MurNAc-pentapeptide, known as lipid I. The sequence is that of Phospho-N-acetylmuramoyl-pentapeptide-transferase from Pseudomonas fluorescens (strain SBW25).